The primary structure comprises 94 residues: Large ribosomal subunit protein uL23 (94 aa).

It belongs to the universal ribosomal protein uL23 family. As to quaternary structure, part of the 50S ribosomal subunit. Contacts protein L29, and trigger factor when it is bound to the ribosome.

Its function is as follows. One of the early assembly proteins it binds 23S rRNA. One of the proteins that surrounds the polypeptide exit tunnel on the outside of the ribosome. Forms the main docking site for trigger factor binding to the ribosome. The chain is Large ribosomal subunit protein uL23 from Geobacter sulfurreducens (strain ATCC 51573 / DSM 12127 / PCA).